The chain runs to 145 residues: Peptide methionine sulfoxide reductase MsrB (145 aa).

In terms of domain architecture, MsrB spans 6–129 (KNERLKQLTD…NSAALRFIPV (124 aa)). The active-site Nucleophile is Cys-118.

This sequence belongs to the MsrB Met sulfoxide reductase family.

It carries out the reaction L-methionyl-[protein] + [thioredoxin]-disulfide + H2O = L-methionyl-(R)-S-oxide-[protein] + [thioredoxin]-dithiol. The chain is Peptide methionine sulfoxide reductase MsrB from Listeria welshimeri serovar 6b (strain ATCC 35897 / DSM 20650 / CCUG 15529 / CIP 8149 / NCTC 11857 / SLCC 5334 / V8).